Here is a 255-residue protein sequence, read N- to C-terminus: Small ribosomal subunit protein eS1B (255 aa).

Position 2 is an N-acetylalanine; partial (A2). S245 is modified (phosphoserine). A Glycyl lysine isopeptide (Lys-Gly) (interchain with G-Cter in ubiquitin) cross-link involves residue K248. T254 is subject to Phosphothreonine.

It belongs to the eukaryotic ribosomal protein eS1 family. Component of the small ribosomal subunit. Mature ribosomes consist of a small (40S) and a large (60S) subunit. The 40S subunit contains about 33 different proteins and 1 molecule of RNA (18S). The 60S subunit contains about 49 different proteins and 3 molecules of RNA (25S, 5.8S and 5S).

Its subcellular location is the cytoplasm. The sequence is that of Small ribosomal subunit protein eS1B from Saccharomyces cerevisiae (strain RM11-1a) (Baker's yeast).